The chain runs to 119 residues: Large ribosomal subunit protein bL12 (119 aa).

Belongs to the bacterial ribosomal protein bL12 family. As to quaternary structure, homodimer. Part of the ribosomal stalk of the 50S ribosomal subunit. Forms a multimeric L10(L12)X complex, where L10 forms an elongated spine to which 2 to 4 L12 dimers bind in a sequential fashion. Binds GTP-bound translation factors.

Forms part of the ribosomal stalk which helps the ribosome interact with GTP-bound translation factors. Is thus essential for accurate translation. This is Large ribosomal subunit protein bL12 from Colwellia psychrerythraea (strain 34H / ATCC BAA-681) (Vibrio psychroerythus).